A 76-amino-acid chain; its full sequence is Small ribosomal subunit protein bS16 (76 aa).

It belongs to the bacterial ribosomal protein bS16 family.

The chain is Small ribosomal subunit protein bS16 from Helicobacter pylori (strain HPAG1).